The chain runs to 3739 residues: Pikromycin polyketide synthase component PikAII (3739 aa).

Positions 35–463 (GEPVAIVGMA…GTNAHVVLEE (429 aa)) constitute a Ketosynthase family 3 (KS3) 1 domain. Module stretches follow at residues 38-1517 (VAIV…EFLL) and 1542-3642 (VAIV…GHLL). Cys208 (acyl-thioester intermediate; for beta-ketoacyl synthase 1 activity) is an active-site residue. Catalysis depends on for beta-ketoacyl synthase 1 activity residues His343 and His383. The segment at 572–877 (FVFPGQGTQW…ERLVTSLAEA (306 aa)) is acyltransferase 1. Ser662 acts as the Acyl-ester intermediate; for acyltransferase 1 activity in catalysis. Positions 1150 to 1343 (GTVLVTGAEE…VTSVAWSPWE (194 aa)) are C2-type beta-ketoacyl reductase 1. Tyr1313 functions as the For C2-type beta-ketoacyl reductase 1 and probable racemase activities in the catalytic mechanism. The region spanning 1445–1520 (RRMQELVREH…TLAEFLLAEI (76 aa)) is the Carrier 1 domain. Ser1480 carries the post-translational modification O-(pantetheine 4'-phosphoryl)serine. The Ketosynthase family 3 (KS3) 2 domain maps to 1539-1967 (DEPVAIVGMA…GTNAHIVLEE (429 aa)). The active-site Acyl-thioester intermediate; for beta-ketoacyl synthase 2 activity is the Cys1712. Catalysis depends on for beta-ketoacyl synthase 2 activity residues His1847 and His1887. The tract at residues 2069–2374 (FVFPGQGTQW…HRLTTSLAEA (306 aa)) is acyltransferase 2. The active-site Acyl-ester intermediate; for acyltransferase 2 activity is Ser2159. Residues 2428–2553 (HPLLGAAVAL…GVLAARADRT (126 aa)) are N-terminal hotdog fold. Residues 2428 to 2703 (HPLLGAAVAL…LTVLPVDPAQ (276 aa)) form a dehydratase region. The region spanning 2428–2705 (HPLLGAAVAL…VLPVDPAQLA (278 aa)) is the PKS/mFAS DH domain. The active-site Proton acceptor; for dehydratase activity is the His2460. Positions 2567–2705 (AEPVDVDGLY…VLPVDPAQLA (139 aa)) are C-terminal hotdog fold. Asp2629 serves as the catalytic Proton donor; for dehydratase activity. The tract at residues 2959-3267 (GSLESLTAAP…QARHTGKVVL (309 aa)) is enoyl reductase. The active-site For enoyl reductase activity is Tyr3005. NADP(+)-binding positions include 3092–3109 (LLVH…VQLA), 3285–3288 (TGAL), 3309–3312 (SRRG), 3338–3339 (DV), Lys3388, and 3412–3413 (FS). The beta-ketoacyl reductase 2 stretch occupies residues 3277 to 3458 (GTVLLTGGTG…LSLGWGLWAE (182 aa)). Catalysis depends on Tyr3427, which acts as the For beta-ketoacyl reductase 2 activity. The Carrier 2 domain maps to 3570–3645 (AHLRDLVRTH…ELAGHLLDEL (76 aa)). Ser3605 is modified (O-(pantetheine 4'-phosphoryl)serine).

Homodimer. Pikromycin PKS consists of a combination of multimodular (PikAI and PikAII) and monomodular (PikAIII and PikAIV) polypeptides each coding for a functional synthase subunit which participates in 1 (monomodular) or 2 (multimodular) of the six FAS-like elongation steps required for formation of the polyketide. Module 1, 2, 3, 4, 5, and 6 participating in biosynthesis steps 1, 2, 3, 4, 5, and 6, respectively. It depends on pantetheine 4'-phosphate as a cofactor.

The enzyme catalyses 5 (S)-methylmalonyl-CoA + malonyl-CoA + 5 NADPH + 11 H(+) = 10-deoxymethynolide + 6 CO2 + 5 NADP(+) + 6 CoA + 2 H2O. The catalysed reaction is 6 (S)-methylmalonyl-CoA + malonyl-CoA + 5 NADPH + 12 H(+) = narbonolide + 7 CO2 + 5 NADP(+) + 7 CoA + 2 H2O. Its pathway is antibiotic biosynthesis. In terms of biological role, involved in the biosynthesis of 12- and 14-membered ring macrolactone antibiotics such as methymycin/neomethymycin and pikromycin/narbomycin, respectively. Component of the pikromycin PKS which catalyzes the biosynthesis of both precursors 10-deoxymethynolide (12-membered ring macrolactone) and narbonolide (14-membered ring macrolactone). Chain elongation through PikAI, PikAII and PikAIII followed by thioesterase catalyzed termination results in the production of 10-deoxymethynolide, while continued elongation through PikAIV, followed by thioesterase (TE) catalyzed cyclization results in the biosynthesis of the narbonolide. This is Pikromycin polyketide synthase component PikAII from Streptomyces venezuelae.